The following is a 493-amino-acid chain: Glutamyl-tRNA(Gln) amidotransferase subunit A (493 aa).

Residues lysine 78 and serine 158 each act as charge relay system in the active site. Serine 182 functions as the Acyl-ester intermediate in the catalytic mechanism.

The protein belongs to the amidase family. GatA subfamily. In terms of assembly, heterotrimer of A, B and C subunits.

It catalyses the reaction L-glutamyl-tRNA(Gln) + L-glutamine + ATP + H2O = L-glutaminyl-tRNA(Gln) + L-glutamate + ADP + phosphate + H(+). Functionally, allows the formation of correctly charged Gln-tRNA(Gln) through the transamidation of misacylated Glu-tRNA(Gln) in organisms which lack glutaminyl-tRNA synthetase. The reaction takes place in the presence of glutamine and ATP through an activated gamma-phospho-Glu-tRNA(Gln). The polypeptide is Glutamyl-tRNA(Gln) amidotransferase subunit A (Azorhizobium caulinodans (strain ATCC 43989 / DSM 5975 / JCM 20966 / LMG 6465 / NBRC 14845 / NCIMB 13405 / ORS 571)).